Consider the following 649-residue polypeptide: Endoglucanase D (649 aa).

A signal peptide spans 1–41 (MSRMTLKSSMKKRVLSLLIAVVFLSLTGVFPSGLIETKVSA). The active-site Nucleophile is D201. Catalysis depends on residues H516 and D546. E555 (proton donor) is an active-site residue. A Dockerin domain is found at 579–649 (NEVLYGDVND…LIRVIEKLPI (71 aa)).

The protein belongs to the glycosyl hydrolase 9 (cellulase E) family. Ca(2+) serves as cofactor.

The catalysed reaction is Endohydrolysis of (1-&gt;4)-beta-D-glucosidic linkages in cellulose, lichenin and cereal beta-D-glucans.. This enzyme catalyzes the endohydrolysis of 1,4-beta-glucosidic linkages in cellulose, lichenin and cereal beta-D-glucans. This chain is Endoglucanase D (celD), found in Acetivibrio thermocellus (strain ATCC 27405 / DSM 1237 / JCM 9322 / NBRC 103400 / NCIMB 10682 / NRRL B-4536 / VPI 7372) (Clostridium thermocellum).